The following is a 371-amino-acid chain: Germination protease (371 aa).

A propeptide spanning residues Met1–Asp16 is cleaved from the precursor.

Belongs to the peptidase A25 family. Homotetramer. Post-translationally, autoproteolytically processed. The inactive tetrameric zymogen termed p46 autoprocesses to a smaller form termed p41, which is active only during spore germination.

The catalysed reaction is Endopeptidase action with P4 Glu or Asp, P1 preferably Glu &gt; Asp, P1' hydrophobic and P2' Ala.. Initiates the rapid degradation of small, acid-soluble proteins during spore germination. This chain is Germination protease, found in Bacillus pumilus (strain SAFR-032).